We begin with the raw amino-acid sequence, 535 residues long: EH domain-containing protein 3 (535 aa).

At Met-1 the chain carries N-acetylmethionine. The Dynamin-type G domain maps to 55–286 (FDNKPMVLLV…DLFKDIQSLP (232 aa)). Positions 65 to 72 (GQYSTGKT) are G1 motif. An ATP-binding site is contributed by 65 to 72 (GQYSTGKT). A G2 motif region spans residues 91-92 (EP). The segment at 153 to 156 (DTPG) is G3 motif. Positions 198-227 (DEFSEVIKALKNHEDKMRVVLNKADQIETQ) form a coiled coil. The tract at residues 219–222 (NKAD) is G4 motif. Residue Lys-220 participates in ATP binding. Ile-243 is a region of interest (G5 motif). Position 258 (Trp-258) interacts with ATP. Residue Lys-315 forms a Glycyl lysine isopeptide (Lys-Gly) (interchain with G-Cter in SUMO) linkage. 2 positions are modified to phosphoserine: Ser-349 and Ser-456. The region spanning 444–532 (DKPMYDEIFY…AHLLPPSKRK (89 aa)) is the EH domain. The region spanning 476 to 511 (LPNSVLGKIWKLADIDKDGMLDDEEFALANHLIKVK) is the EF-hand domain. Ca(2+)-binding residues include Asp-489, Asp-491, Asp-493, Met-495, and Glu-500. Residue Lys-511 forms a Glycyl lysine isopeptide (Lys-Gly) (interchain with G-Cter in SUMO) linkage.

This sequence belongs to the TRAFAC class dynamin-like GTPase superfamily. Dynamin/Fzo/YdjA family. EHD subfamily. Homooligomer, and heterooligomer with EHD1, EHD2 and EHD4, ATP-binding is required for heterooligomerization. Interacts with PACSIN1. Interacts with PACSIN2. Interacts (via EH domain) with MICALL1. Interacts (via EH domain) with RAB11FIP2. Interacts with ANK2. Interacts with CACNA1GG and CACNA1H.

The protein resides in the recycling endosome membrane. It localises to the cell membrane. It is found in the cell projection. The protein localises to the cilium membrane. Functionally, ATP- and membrane-binding protein that controls membrane reorganization/tubulation upon ATP hydrolysis. In vitro causes tubulation of endocytic membranes. Binding to phosphatidic acid induces its membrane tubulation activity. Plays a role in endocytic transport. Involved in early endosome to recycling endosome compartment (ERC), retrograde early endosome to Golgi, and endosome to plasma membrane (rapid recycling) protein transport. Involved in the regulation of Golgi maintenance and morphology. Involved in the recycling of internalized D1 dopamine receptor. Plays a role in cardiac protein trafficking probably implicating ANK2. Involved in the ventricular membrane targeting of SLC8A1 and CACNA1C and probably the atrial membrane localization of CACNA1GG and CACNA1H implicated in the regulation of atrial myocyte excitability and cardiac conduction. In conjunction with EHD4 may be involved in endocytic trafficking of KDR/VEGFR2 implicated in control of glomerular function. Involved in the rapid recycling of integrin beta-3 implicated in cell adhesion maintenance. Involved in the unidirectional retrograde dendritic transport of endocytosed BACE1 and in efficient sorting of BACE1 to axons implicating a function in neuronal APP processing. Plays a role in the formation of the ciliary vesicle, an early step in cilium biogenesis; possibly sharing redundant functions with Ehd1. The polypeptide is EH domain-containing protein 3 (Rattus norvegicus (Rat)).